The sequence spans 368 residues: 3-dehydroquinate synthase (368 aa).

Residues 112 to 116 (GVIGD), 136 to 137 (TT), Lys-149, and Lys-158 contribute to the NAD(+) site. 3 residues coordinate Zn(2+): Glu-191, His-256, and His-273.

Belongs to the sugar phosphate cyclases superfamily. Dehydroquinate synthase family. It depends on Co(2+) as a cofactor. Zn(2+) is required as a cofactor. NAD(+) serves as cofactor.

It localises to the cytoplasm. It catalyses the reaction 7-phospho-2-dehydro-3-deoxy-D-arabino-heptonate = 3-dehydroquinate + phosphate. The protein operates within metabolic intermediate biosynthesis; chorismate biosynthesis; chorismate from D-erythrose 4-phosphate and phosphoenolpyruvate: step 2/7. Catalyzes the conversion of 3-deoxy-D-arabino-heptulosonate 7-phosphate (DAHP) to dehydroquinate (DHQ). This Prochlorococcus marinus (strain NATL1A) protein is 3-dehydroquinate synthase.